Consider the following 301-residue polypeptide: Acetylglutamate kinase (301 aa).

Residues 68–69 (GG), R90, and N195 contribute to the substrate site.

This sequence belongs to the acetylglutamate kinase family. ArgB subfamily.

Its subcellular location is the cytoplasm. It carries out the reaction N-acetyl-L-glutamate + ATP = N-acetyl-L-glutamyl 5-phosphate + ADP. Its pathway is amino-acid biosynthesis; L-arginine biosynthesis; N(2)-acetyl-L-ornithine from L-glutamate: step 2/4. In terms of biological role, catalyzes the ATP-dependent phosphorylation of N-acetyl-L-glutamate. The chain is Acetylglutamate kinase from Ectopseudomonas mendocina (strain ymp) (Pseudomonas mendocina).